The sequence spans 216 residues: MLDREGFRPNVGIILLNAHNEVFWGKRLREHSWQFPQGGIKYGETPMQAMYRELHEETGLLPEHVKIIGRTRDWLRYEVPDKFIKREVRGHYRGQKQIWFLLRMVGRDCDICLRATDHPEFDAWRWNEYWVPLDAVIEFKRDVYQLALTELSRFLRRPAQRTDKSRGPRAPRYPRVANGHAASEAPAAIDTSAVCSEVEPGANALDETPPRVSLRD.

One can recognise a Nudix hydrolase domain in the interval 6 to 149 (GFRPNVGIIL…KRDVYQLALT (144 aa)). Positions 38–59 (GGIKYGETPMQAMYRELHEETG) match the Nudix box motif. The segment at 159-188 (AQRTDKSRGPRAPRYPRVANGHAASEAPAA) is disordered.

The protein belongs to the Nudix hydrolase family. RppH subfamily. It depends on a divalent metal cation as a cofactor.

Its function is as follows. Accelerates the degradation of transcripts by removing pyrophosphate from the 5'-end of triphosphorylated RNA, leading to a more labile monophosphorylated state that can stimulate subsequent ribonuclease cleavage. In Burkholderia mallei (strain NCTC 10247), this protein is RNA pyrophosphohydrolase.